A 546-amino-acid polypeptide reads, in one-letter code: Pre-mRNA-splicing factor 38B (546 aa).

Positions 1–14 (MANNSPALTGNSQP) are enriched in polar residues. The disordered stretch occupies residues 1–40 (MANNSPALTGNSQPQHQAAAAAAQQQQQCGGGGATKPAVS). Position 2 is an N-acetylalanine (alanine 2). Serine 5 is modified (phosphoserine). Over residues 15 to 28 (QHQAAAAAAQQQQQ) the composition is skewed to low complexity. N6-acetyllysine is present on lysine 227. The segment at 229 to 546 (IDQQIKTRPR…KQHKNKDETV (318 aa)) is disordered. A compositionally biased stretch (basic and acidic residues) spans 243–255 (DGKEGAEEIDRHV). Positions 256–284 (ERRRSRSPRRSLSPRRSPRRSRSRSHHRE) are enriched in basic residues. Residues serine 288, serine 290, serine 318, and serine 320 each carry the phosphoserine modification. Positions 291-327 (FDRELEREKERQRLEREAKEREKERRRSRSIDRGLER) are enriched in basic and acidic residues. Residues 292–321 (DRELEREKERQRLEREAKEREKERRRSRSI) are a coiled coil. A compositionally biased stretch (basic residues) spans 328-344 (RRSRSRERHRSRSRSRD). Positions 345–421 (RKGDRRDRDR…HRDDKRDSKK (77 aa)) are enriched in basic and acidic residues. A compositionally biased stretch (basic residues) spans 422–450 (EKKHSRSRSRERKHRSRSRSRNAGKRSRS). Phosphoserine is present on serine 448. Over residues 451–468 (RSKEKSSKHKNESKEKSN) the composition is skewed to basic and acidic residues. A phosphoserine mark is found at serine 473, serine 475, and serine 481. A compositionally biased stretch (basic and acidic residues) spans 480–495 (DSVEKSKKREHSPSKE). Positions 496 to 510 (KSRKRSRSKERSHKR) are enriched in basic residues. Over residues 511-546 (DHSDSKDQSDKHDRRRSQSIEQESQEKQHKNKDETV) the composition is skewed to basic and acidic residues. Phosphoserine is present on residues serine 527, serine 529, and serine 534.

It belongs to the PRP38 family.

The protein resides in the nucleus. In terms of biological role, may be required for pre-mRNA splicing. This Homo sapiens (Human) protein is Pre-mRNA-splicing factor 38B (PRPF38B).